Here is a 722-residue protein sequence, read N- to C-terminus: Glycine--tRNA ligase beta subunit (722 aa).

This sequence belongs to the class-II aminoacyl-tRNA synthetase family. Tetramer of two alpha and two beta subunits.

The protein localises to the cytoplasm. It carries out the reaction tRNA(Gly) + glycine + ATP = glycyl-tRNA(Gly) + AMP + diphosphate. The protein is Glycine--tRNA ligase beta subunit of Haemophilus influenzae (strain 86-028NP).